A 254-amino-acid polypeptide reads, in one-letter code: L-arabinose 1-dehydrogenase (NAD(P)(+)) (254 aa).

Tyr-142 functions as the Proton acceptor in the catalytic mechanism. NAD(+) contacts are provided by Tyr-142 and Lys-146.

The protein belongs to the NAD(P)-dependent epimerase/dehydratase family. In terms of assembly, homotetramer.

The enzyme catalyses alpha-L-arabinopyanose + NAD(+) = L-arabinono-1,4-lactone + NADH + H(+). It carries out the reaction alpha-L-arabinopyanose + NADP(+) = L-arabinono-1,4-lactone + NADPH + H(+). It participates in carbohydrate degradation; L-arabinose degradation via L-arabinono-1,4-lactone pathway. Functionally, L-AraDH initiates the degradation of L-arabinose. Catalyzes the NAD(P)(+)-dependent conversion of L-arabinose to L-arabino-gamma-lactone. It is highly specific for L-arabinose as substrate and can use both NADP(+) and NAD(+) as electron acceptor, with a slight preference for NADP(+). The chain is L-arabinose 1-dehydrogenase (NAD(P)(+)) from Haloferax volcanii (strain ATCC 29605 / DSM 3757 / JCM 8879 / NBRC 14742 / NCIMB 2012 / VKM B-1768 / DS2) (Halobacterium volcanii).